The following is a 390-amino-acid chain: ATP-sensitive inward rectifier potassium channel 11 (390 aa).

Over 1 to 65 the chain is Cytoplasmic; it reads MLSRKGIIPE…LQDVFTTLVD (65 aa). The ATP site is built by N48 and R50. Residues 66-92 traverse the membrane as a helical segment; it reads LKWPHTLLIFTMSFLCSWLLFAMVWWL. Over 93-116 the chain is Extracellular; that stretch reads IAFAHGDLAPGEGTTVPCVTSIHS. C110 and C142 are oxidised to a cystine. Residues 117-133 constitute an intramembrane region (discontinuously helical; Pore-forming); the sequence is FSSAFLFSIEVQVTIGF. Residues T130 and F133 each coordinate K(+). The Selectivity filter motif lies at 130–135; the sequence is TIGFGG. The Extracellular portion of the chain corresponds to 134-142; sequence GGRMVTEEC. Residues 143 to 171 traverse the membrane as a helical segment; it reads PLAILILIVQNIVGLMINAIMLGCIFMKT. Residues 172–390 are Cytoplasmic-facing; sequence SQAHRRAETL…RFSISPDSLS (219 aa). Position 176 (R176) interacts with a 1,2-diacyl-sn-glycero-3-phospho-(1D-myo-inositol-4,5-bisphosphate). ATP is bound at residue Y330. The residue at position 341 (T341) is a Phosphothreonine; by MAPK1. Position 385 is a phosphoserine; by MAPK1 (S385).

This sequence belongs to the inward rectifier-type potassium channel (TC 1.A.2.1) family. KCNJ11 subfamily. Homotetramer; the homotetramer binds four ATP molecules (one ATP per subunit). Forms an heterooctamer with ABCC8/SUR1; one KCNJ11 homotetramer interacts with four ABCC8/SUR1 molecules. Interacts with ABCC9/SUR2. Post-translationally, phosphorylation by MAPK1 results in changes in channel gating that destabilize the closed states and reduce the ATP sensitivity.

Its subcellular location is the membrane. The enzyme catalyses K(+)(in) = K(+)(out). KATP channels are regulated by cytoplasmic ATP/ADP ratios; ATP inhibits the channel by closing the pore, while ADP activates the channel. Activated by phosphatidylinositol 4,5-biphosphate (PtdIns(4,5)P2). Inward rectifier potassium channel that forms the pore of ATP-sensitive potassium channels (KATP), regulating potassium permeability as a function of cytoplasmic ATP and ADP concentrations in many different cells. Inward rectifier potassium channels are characterized by a greater tendency to allow potassium to flow into the cell rather than out of it. Their voltage dependence is regulated by the concentration of extracellular potassium; as external potassium is raised, the voltage range of the channel opening shifts to more positive voltages. The inward rectification is mainly due to the blockage of outward current by internal magnesium. Can be blocked by extracellular barium. In pancreatic cells, it forms KATP channels with ABCC8/SUR1. Can form cardiac and smooth muscle-type KATP channels with ABCC9. This is ATP-sensitive inward rectifier potassium channel 11 (KCNJ11) from Cavia porcellus (Guinea pig).